Reading from the N-terminus, the 173-residue chain is Crossover junction endodeoxyribonuclease RuvC (173 aa).

Residues aspartate 8, glutamate 67, and aspartate 139 contribute to the active site. Positions 8, 67, and 139 each coordinate Mg(2+).

This sequence belongs to the RuvC family. In terms of assembly, homodimer which binds Holliday junction (HJ) DNA. The HJ becomes 2-fold symmetrical on binding to RuvC with unstacked arms; it has a different conformation from HJ DNA in complex with RuvA. In the full resolvosome a probable DNA-RuvA(4)-RuvB(12)-RuvC(2) complex forms which resolves the HJ. Mg(2+) serves as cofactor.

The protein localises to the cytoplasm. The enzyme catalyses Endonucleolytic cleavage at a junction such as a reciprocal single-stranded crossover between two homologous DNA duplexes (Holliday junction).. The RuvA-RuvB-RuvC complex processes Holliday junction (HJ) DNA during genetic recombination and DNA repair. Endonuclease that resolves HJ intermediates. Cleaves cruciform DNA by making single-stranded nicks across the HJ at symmetrical positions within the homologous arms, yielding a 5'-phosphate and a 3'-hydroxyl group; requires a central core of homology in the junction. The consensus cleavage sequence is 5'-(A/T)TT(C/G)-3'. Cleavage occurs on the 3'-side of the TT dinucleotide at the point of strand exchange. HJ branch migration catalyzed by RuvA-RuvB allows RuvC to scan DNA until it finds its consensus sequence, where it cleaves and resolves the cruciform DNA. The polypeptide is Crossover junction endodeoxyribonuclease RuvC (Vibrio atlanticus (strain LGP32) (Vibrio splendidus (strain Mel32))).